The sequence spans 1960 residues: Myosin-9 (1960 aa).

At A2 the chain carries N-acetylalanine. The mediates interaction with LIMCH1 stretch occupies residues 2-838 (AQQAADKYLY…RLFTKVKPLL (837 aa)). Position 8 is an N6-acetyllysine (K8). At Y11 the chain carries Phosphotyrosine. Residues 27–77 (AAKKLVWVPSDKSGFEPASLKEEVGEEAIVELVENGKKVKVNKDDIQKMNP) form the Myosin N-terminal SH3-like domain. The Myosin motor domain maps to 81–776 (SKVEDMAELT…VLAHLEEERD (696 aa)). Residue K102 is modified to N6-acetyllysine. 174–181 (GESGAGKT) serves as a coordination point for ATP. N6-acetyllysine is present on residues K299, K435, and K613. A Phosphoserine modification is found at S628. The interval 654–676 (LAKLMATLRNTNPNFVRCIIPNH) is actin-binding. Position 754 is a phosphotyrosine (Y754). An IQ domain is found at 779 to 808 (ITDVIIGFQACCRGYLARKAFAKRQQQLTA). Residues 837–1926 (LLQVSRQEEE…LKNKLRRGDL (1090 aa)) adopt a coiled-coil conformation. Position 850 is an N6-succinyllysine (K850). An N6-acetyllysine mark is found at K860, K975, and K1024. At S1114 the chain carries Phosphoserine. A disordered region spans residues 1117–1137 (QEDLESERASRNKAEKQKRDL). The span at 1122–1137 (SERASRNKAEKQKRDL) shows a compositional bias: basic and acidic residues. An N6-acetyllysine mark is found at K1234, K1249, K1357, K1392, K1404, K1410, K1459, and K1638. K1669 bears the N6-succinyllysine mark. Residue S1714 is modified to Phosphoserine. An N6-acetyllysine mark is found at K1793, K1802, and K1845. The disordered stretch occupies residues 1877 to 1918 (RQLEEAEEEAQRANASRRKLQRELEDATETADAMNREVSSLK). Residue R1923 is modified to Omega-N-methylarginine. The segment at 1934–1960 (VARKGAGDCSDEEVDGKADGAEAKAAE) is disordered. S1943 carries the post-translational modification Phosphoserine. Residues 1948–1960 (DGKADGAEAKAAE) show a composition bias toward basic and acidic residues.

This sequence belongs to the TRAFAC class myosin-kinesin ATPase superfamily. Myosin family. As to quaternary structure, myosin is a hexameric protein that consists of 2 heavy chain subunits (MHC), 2 alkali light chain subunits (MLC) and 2 regulatory light chain subunits (MLC-2). Interacts with RASIP1. Interacts with DDR1. Interacts with PDLIM2. Interacts with SVIL. Interacts with HTRA3. Interacts with Myo7a. Interacts with CFAP95. Interacts with LIMCH1; independently of the integration of MYH9 into the myosin complex. Interacts with RAB3A. Interacts with ZBED4. Interacts with S100A4; this interaction increases cell motility. Post-translationally, ISGylated. Ubiquitination.

It is found in the cytoplasm. Its subcellular location is the cytoskeleton. The protein resides in the cell cortex. The protein localises to the cytoplasmic vesicle. It localises to the secretory vesicle. It is found in the cortical granule. Its function is as follows. Cellular myosin that appears to play a role in cytokinesis, cell shape, and specialized functions such as secretion and capping. Required for cortical actin clearance prior to oocyte exocytosis. Promotes cell motility in conjunction with S100A4. During cell spreading, plays an important role in cytoskeleton reorganization, focal contact formation (in the margins but not the central part of spreading cells), and lamellipodial retraction; this function is mechanically antagonized by MYH10. In Canis lupus familiaris (Dog), this protein is Myosin-9 (MYH9).